The chain runs to 163 residues: MSDVENQPFFNIQRVYLKDMSLEQPNSPAIFLEQDMPSVEVEVDVKAERLAESVFEVVVSGTVTAKVKDKVAFLIEAKQAGIFDIRNIPDEQLDPLVGIACPTILFPYLRSNIADAITRAGFPPIHLAEINFQALYEQRLAQLQQQAGAAGAPNGAPNGTTLN.

It belongs to the SecB family. In terms of assembly, homotetramer, a dimer of dimers. One homotetramer interacts with 1 SecA dimer.

The protein resides in the cytoplasm. Functionally, one of the proteins required for the normal export of preproteins out of the cell cytoplasm. It is a molecular chaperone that binds to a subset of precursor proteins, maintaining them in a translocation-competent state. It also specifically binds to its receptor SecA. The chain is Protein-export protein SecB from Burkholderia ambifaria (strain MC40-6).